Here is a 92-residue protein sequence, read N- to C-terminus: Protein S100-B (92 aa).

Ser2 carries the blocked amino end (Ser); alternate modification. Ser2 bears the N-acetylserine; alternate mark. EF-hand domains are found at residues 13-48 and 49-84; these read DVFHQYSGREGDKHKLKKSELKELINNELSHFLEEI and KEQEVVDKVMETLDNDGDGECDFQEFMAFVAMVTTA. Position 16 (His16) interacts with Zn(2+). 3 residues coordinate Ca(2+): Ser19, Glu22, and Asp24. His26 is a binding site for Zn(2+). Ca(2+) contacts are provided by Lys27, Glu32, Asp62, Asp64, Asp66, Glu68, and Glu73. The Zn(2+) site is built by His86 and His91.

The protein belongs to the S-100 family. Dimer of either two alpha chains, or two beta chains, or one alpha and one beta chain. The S100B dimer binds two molecules of STK38. Interacts with CACYBP in a calcium-dependent manner. Interacts with ATAD3A; this interaction probably occurs in the cytosol prior to ATAD3A mitochondrial targeting. Interacts with S100A6. The S100B dimer interacts with two molecules of CAPZA1. Interacts with AGER. Interacts with PPP5C (via TPR repeats); the interaction is calcium-dependent and modulates PPP5C activity. Interacts with TPPP; this interaction inhibits TPPP dimerization. Interacts with isoform CLSTN3beta of CLSTN3; interaction promotes secretion. As to expression, although predominant among the water-soluble brain proteins, S100 is also found in a variety of other tissues.

The protein resides in the cytoplasm. The protein localises to the nucleus. It localises to the secreted. Its function is as follows. Small zinc- and- and calcium-binding protein that is highly expressed in astrocytes and constitutes one of the most abundant soluble proteins in brain. Weakly binds calcium but binds zinc very tightly-distinct binding sites with different affinities exist for both ions on each monomer. Physiological concentrations of potassium ion antagonize the binding of both divalent cations, especially affecting high-affinity calcium-binding sites. Acts as a neurotrophic factor that promotes astrocytosis and axonal proliferation. Involved in innervation of thermogenic adipose tissue by acting as an adipocyte-derived neurotrophic factor that promotes sympathetic innervation of adipose tissue. Binds to and initiates the activation of STK38 by releasing autoinhibitory intramolecular interactions within the kinase. Interaction with AGER after myocardial infarction may play a role in myocyte apoptosis by activating ERK1/2 and p53/TP53 signaling. Could assist ATAD3A cytoplasmic processing, preventing aggregation and favoring mitochondrial localization. May mediate calcium-dependent regulation on many physiological processes by interacting with other proteins, such as TPR-containing proteins, and modulating their activity. The protein is Protein S100-B of Homo sapiens (Human).